A 608-amino-acid polypeptide reads, in one-letter code: Kelch-like protein 10 (608 aa).

The region spanning 39-106 (CDVVIKVNGF…AYTRTVPITP (68 aa)) is the BTB domain. 6 Kelch repeats span residues 292-339 (ILFA…YLKG), 340-386 (YVYI…VLSN), 388-433 (IYAM…TLYG), 434-480 (KVYI…AYGE), 481-527 (HVYA…VVDD), and 529-574 (LFVV…VVPG). S501 is subject to Phosphoserine.

As to quaternary structure, self-associates. Interacts with CUL3; indicative for the participation in an E3 ubiquitin ligase complex. As to expression, testis specific.

The protein resides in the cytoplasm. It functions in the pathway protein modification; protein ubiquitination. In terms of biological role, may be a substrate-specific adapter of a CUL3-based E3 ubiquitin-protein ligase complex which mediates the ubiquitination and subsequent proteasomal degradation of target proteins during spermatogenesis. Required for male fertility. In Mus musculus (Mouse), this protein is Kelch-like protein 10 (Klhl10).